Here is an 824-residue protein sequence, read N- to C-terminus: Protein-glutamine gamma-glutamyltransferase K (824 aa).

Positions methionine 1–arginine 10 are enriched in basic and acidic residues. Disordered stretches follow at residues methionine 1–serine 44 and aspartate 61–aspartate 110. At threonine 20 the chain carries Phosphothreonine. Phosphoserine occurs at positions 22, 70, 92, 100, and 103. Residues proline 65 to serine 76 show a composition bias toward low complexity. Positions glycine 85–serine 100 are enriched in basic and acidic residues. Residues cysteine 385, histidine 444, and aspartate 467 contribute to the active site. Ca(2+) contacts are provided by asparagine 507, aspartate 509, glutamate 556, and glutamate 561. Positions arginine 801 to alanine 824 are disordered. Phosphoserine is present on serine 812.

Belongs to the transglutaminase superfamily. Transglutaminase family. As to quaternary structure, interacts with PLAAT4. The cofactor is Ca(2+). Palmitoylated. Post-translationally, the membrane anchorage region possesses a cluster of five cysteines within which fatty acid(s) may become thioester-linked. It is subject to phorbol ester-stimulated phosphorylation and is hypersensitive to proteolysis, which releases the enzyme in a soluble form. In terms of processing, tyrosine-phosphorylated.

The protein localises to the membrane. The enzyme catalyses L-glutaminyl-[protein] + L-lysyl-[protein] = [protein]-L-lysyl-N(6)-5-L-glutamyl-[protein] + NH4(+). Its function is as follows. Catalyzes the cross-linking of proteins and the conjugation of polyamines to proteins. Responsible for cross-linking epidermal proteins during formation of the stratum corneum. Involved in cell proliferation. The chain is Protein-glutamine gamma-glutamyltransferase K (Tgm1) from Rattus norvegicus (Rat).